Here is a 287-residue protein sequence, read N- to C-terminus: Nucleotide-binding protein Gbem_0872 (287 aa).

8–15 (GLSGSGKS) lines the ATP pocket. 59–62 (DIRS) lines the GTP pocket.

Belongs to the RapZ-like family.

Displays ATPase and GTPase activities. This chain is Nucleotide-binding protein Gbem_0872, found in Citrifermentans bemidjiense (strain ATCC BAA-1014 / DSM 16622 / JCM 12645 / Bem) (Geobacter bemidjiensis).